We begin with the raw amino-acid sequence, 345 residues long: Serine proteinase inhibitor 2 (345 aa).

The protein belongs to the serpin family. Poxviruses subfamily.

The protein localises to the host cytoplasm. Viral serpin that inhibits both cysteine and serine proteinases involved in the regulation of host inflammatory and apoptosis processes. Major anti-apoptotic protein which inhibits both intrinsic and extrinsic pathways and strongly cleaves host CASP1 and CASP8 but is a rather poor inhibitor of host CASP3. Prevents the proteolytic activity of host interleukin-1-beta converting enzyme (ICE) and ICE-like enzymes. Can also block apoptosis through host tumor necrosis factor (TNF) receptor. The inhibition of host ICE is an example of a 'cross-class' interaction, in which a serpin inhibits a non-serine proteinase. Also inhibits granzyme B. This is Serine proteinase inhibitor 2 (OPG199) from Vaccinia virus (strain Western Reserve) (VACV).